Here is a 143-residue protein sequence, read N- to C-terminus: Putative pre-16S rRNA nuclease (143 aa).

This sequence belongs to the YqgF nuclease family.

The protein localises to the cytoplasm. Could be a nuclease involved in processing of the 5'-end of pre-16S rRNA. This Lactococcus lactis subsp. cremoris (strain SK11) protein is Putative pre-16S rRNA nuclease.